Consider the following 188-residue polypeptide: UPF0461 protein C5orf24 homolog (188 aa).

Ser37 carries the phosphoserine modification. Lys75 is covalently cross-linked (Glycyl lysine isopeptide (Lys-Gly) (interchain with G-Cter in SUMO2)). The disordered stretch occupies residues 79 to 142 (KKKKNLNRSG…GYKVSPGRPP (64 aa)). Residues 80–92 (KKKNLNRSGKRGR) show a composition bias toward basic residues. Residues 94 to 107 (SGTTKSAGYRTSTG) are compositionally biased toward polar residues. Residues Ser121 and Ser180 each carry the phosphoserine modification. A Glycyl lysine isopeptide (Lys-Gly) (interchain with G-Cter in SUMO2) cross-link involves residue Lys184.

Belongs to the UPF0461 family.

The sequence is that of UPF0461 protein C5orf24 homolog from Bos taurus (Bovine).